The chain runs to 130 residues: Ribosome-binding factor A (130 aa).

This sequence belongs to the RbfA family. Monomer. Binds 30S ribosomal subunits, but not 50S ribosomal subunits or 70S ribosomes.

Its subcellular location is the cytoplasm. One of several proteins that assist in the late maturation steps of the functional core of the 30S ribosomal subunit. Associates with free 30S ribosomal subunits (but not with 30S subunits that are part of 70S ribosomes or polysomes). Required for efficient processing of 16S rRNA. May interact with the 5'-terminal helix region of 16S rRNA. The sequence is that of Ribosome-binding factor A from Roseiflexus sp. (strain RS-1).